The primary structure comprises 287 residues: Small ribosomal subunit biogenesis GTPase RsgA (287 aa).

A CP-type G domain is found at 61-218 (SSELIRPTVA…LVDTPGFTTL (158 aa)). GTP is bound by residues 110 to 113 (NKED) and 161 to 169 (GPSGAGKST). Residues C242, C247, H249, and C255 each coordinate Zn(2+).

Belongs to the TRAFAC class YlqF/YawG GTPase family. RsgA subfamily. As to quaternary structure, monomer. Associates with 30S ribosomal subunit, binds 16S rRNA. The cofactor is Zn(2+).

It localises to the cytoplasm. Functionally, one of several proteins that assist in the late maturation steps of the functional core of the 30S ribosomal subunit. Helps release RbfA from mature subunits. May play a role in the assembly of ribosomal proteins into the subunit. Circularly permuted GTPase that catalyzes slow GTP hydrolysis, GTPase activity is stimulated by the 30S ribosomal subunit. The chain is Small ribosomal subunit biogenesis GTPase RsgA from Clostridium perfringens (strain ATCC 13124 / DSM 756 / JCM 1290 / NCIMB 6125 / NCTC 8237 / Type A).